The following is a 289-amino-acid chain: 4-hydroxy-tetrahydrodipicolinate synthase (289 aa).

Position 44 (T44) interacts with pyruvate. Y132 (proton donor/acceptor) is an active-site residue. The Schiff-base intermediate with substrate role is filled by K161. Residue I201 participates in pyruvate binding.

The protein belongs to the DapA family. Homotetramer; dimer of dimers.

It localises to the cytoplasm. It carries out the reaction L-aspartate 4-semialdehyde + pyruvate = (2S,4S)-4-hydroxy-2,3,4,5-tetrahydrodipicolinate + H2O + H(+). It participates in amino-acid biosynthesis; L-lysine biosynthesis via DAP pathway; (S)-tetrahydrodipicolinate from L-aspartate: step 3/4. In terms of biological role, catalyzes the condensation of (S)-aspartate-beta-semialdehyde [(S)-ASA] and pyruvate to 4-hydroxy-tetrahydrodipicolinate (HTPA). The sequence is that of 4-hydroxy-tetrahydrodipicolinate synthase from Methanocaldococcus jannaschii (strain ATCC 43067 / DSM 2661 / JAL-1 / JCM 10045 / NBRC 100440) (Methanococcus jannaschii).